A 985-amino-acid chain; its full sequence is Na(+)/H(+) antiporter (985 aa).

Residues 1-12 are Cytoplasmic-facing; that stretch reads MAIWEQLEVSKA. Residues 13-33 traverse the membrane as a helical segment; sequence HVAYACVGVFSSIFSLVSLYV. Residues 34 to 36 lie on the Extracellular side of the membrane; that stretch reads KEK. A helical transmembrane segment spans residues 37–57; it reads LYIGESTVAGIFGLIVGPVCL. Over 58–70 the chain is Cytoplasmic; that stretch reads NWFNPLKWGNSDS. The chain crosses the membrane as a helical span at residues 71–91; it reads ITLEITRIVLCLQIFAVAVEL. At 92-105 the chain is on the extracellular side; sequence PRKYMLKHWVSVTM. The chain crosses the membrane as a helical span at residues 106–126; the sequence is LLLPVMTAGWLIIGLFVWILI. Over 127-128 the chain is Cytoplasmic; that stretch reads PG. A helical membrane pass occupies residues 129 to 149; that stretch reads LNFSASLLISACITATDPILA. Over 150–176 the chain is Extracellular; sequence QSVVSGKFAQRVPGHLRNLLSAESGCN. A helical transmembrane segment spans residues 177 to 197; sequence DGMAFPFLFLSMNLILHPGNG. The Cytoplasmic portion of the chain corresponds to 198–203; it reads REIVKD. A helical transmembrane segment spans residues 204-224; the sequence is WICVTILYECLFGCLLGCFIG. Residues 225-244 are Extracellular-facing; that stretch reads YVGRITIRFAEKKNIIDRES. The helical transmembrane segment at 245–265 threads the bilayer; sequence FLAFYVVLAFMCAGFGSILGV. Over 266 to 294 the chain is Cytoplasmic; that stretch reads DDLLVSFAAGATFAWDGWFSQKTQESNVS. A helical transmembrane segment spans residues 295 to 315; that stretch reads TVIDLLLNYAYFIYFGAIIPW. At 316 to 319 the chain is on the extracellular side; that stretch reads SQFN. Residues 320–340 traverse the membrane as a helical segment; that stretch reads NGEIGTNVWRLIILSIVVIFL. Residues 341–361 are Cytoplasmic-facing; it reads RRIPAVMILRPLIPDIKSWRE. Residues 362 to 382 form a helical membrane-spanning segment; that stretch reads ALFVGHFGPIGVGAIFAAILA. Over 383 to 410 the chain is Extracellular; the sequence is RGELESTFSDEPTPLNVVPSKEESKHWQ. The helical transmembrane segment at 411-431 threads the bilayer; the sequence is LIACIWPITCFFIVTSIIVHG. Over 432-985 the chain is Cytoplasmic; sequence SSVAIITLGR…ALSKTLGLNK (554 aa). Disordered regions lie at residues 489–701 and 726–760; these read MTLS…KPGT and DRNEARDDEVSVDSTAHSSLTTTMTNLSSSSGGRL. Polar residues predominate over residues 517–526; that stretch reads NNDQIGSVAT. The span at 538-558 shows a compositional bias: basic residues; it reads PRRRKLSRKEKRLNRRQKLRN. Basic and acidic residues-rich tracts occupy residues 559–572 and 580–593; these read KGREIFSSRSKNEM and DLGRERLQKEKEAR. The residue at position 568 (serine 568) is a Phosphoserine. Residues 637–646 are compositionally biased toward low complexity; it reads SFESSERSSS. Over residues 661 to 675 the composition is skewed to acidic residues; that stretch reads EETESEIESEDEMEN. Positions 676–698 are enriched in basic and acidic residues; it reads ESERSMASSEERRIRKMKEEEMK. Over residues 743-756 the composition is skewed to low complexity; sequence SSLTTTMTNLSSSS. Threonine 765 is modified (phosphothreonine). Residues serine 768 and serine 774 each carry the phosphoserine modification. Residues 812–985 form a disordered region; sequence INPHKSDDDK…ALSKTLGLNK (174 aa). Composition is skewed to basic and acidic residues over residues 815–828 and 854–863; these read HKSDDDKSKNRPRN and DEEKAIEGPS. A compositionally biased stretch (acidic residues) spans 887–920; the sequence is LDLEDEPSSEEDLGDSYNMDDSEDYDDNAYESET. Over residues 970–979 the composition is skewed to low complexity; it reads SAAVKSALSK.

This sequence belongs to the fungal Na(+)/H(+) exchanger family.

It localises to the cell membrane. In terms of biological role, sodium export from cell, takes up external protons in exchange for internal sodium ions. Also capable of exporting potassium ions. This chain is Na(+)/H(+) antiporter (NHA1), found in Saccharomyces cerevisiae (strain ATCC 204508 / S288c) (Baker's yeast).